A 226-amino-acid polypeptide reads, in one-letter code: Triosephosphate isomerase (226 aa).

A substrate-binding site is contributed by 10–12; it reads NFK. H96 acts as the Electrophile in catalysis. Residue E144 is the Proton acceptor of the active site. Substrate-binding positions include I149, G184, and 205 to 206; that span reads AS.

Belongs to the triosephosphate isomerase family. In terms of assembly, homotetramer; dimer of dimers.

The protein resides in the cytoplasm. It carries out the reaction D-glyceraldehyde 3-phosphate = dihydroxyacetone phosphate. Its pathway is carbohydrate biosynthesis; gluconeogenesis. It participates in carbohydrate degradation; glycolysis; D-glyceraldehyde 3-phosphate from glycerone phosphate: step 1/1. Its function is as follows. Involved in the gluconeogenesis. Catalyzes stereospecifically the conversion of dihydroxyacetone phosphate (DHAP) to D-glyceraldehyde-3-phosphate (G3P). The protein is Triosephosphate isomerase of Methanopyrus kandleri (strain AV19 / DSM 6324 / JCM 9639 / NBRC 100938).